A 37-amino-acid chain; its full sequence is Cytochrome b6-f complex subunit 5 (37 aa).

Residues 5–25 (LLSGIVLGLVPVTIAGLFVTA) form a helical membrane-spanning segment.

Belongs to the PetG family. In terms of assembly, the 4 large subunits of the cytochrome b6-f complex are cytochrome b6, subunit IV (17 kDa polypeptide, PetD), cytochrome f and the Rieske protein, while the 4 small subunits are PetG, PetL, PetM and PetN. The complex functions as a dimer.

The protein resides in the plastid. The protein localises to the chloroplast thylakoid membrane. Functionally, component of the cytochrome b6-f complex, which mediates electron transfer between photosystem II (PSII) and photosystem I (PSI), cyclic electron flow around PSI, and state transitions. PetG is required for either the stability or assembly of the cytochrome b6-f complex. The protein is Cytochrome b6-f complex subunit 5 of Stigeoclonium helveticum (Green alga).